A 969-amino-acid chain; its full sequence is Putative zinc protease mug138 (969 aa).

H68 is a binding site for Zn(2+). E71 (proton acceptor) is an active-site residue. H72 and E149 together coordinate Zn(2+).

Belongs to the peptidase M16 family.

It is found in the cytoplasm. Has a role in meiosis. This chain is Putative zinc protease mug138 (mug138), found in Schizosaccharomyces pombe (strain 972 / ATCC 24843) (Fission yeast).